The chain runs to 93 residues: Acylphosphatase (93 aa).

Residues 6 to 93 (RLVAWVRGQV…RGGYEGFAIR (88 aa)) form the Acylphosphatase-like domain. Active-site residues include arginine 21 and asparagine 40.

It belongs to the acylphosphatase family.

It catalyses the reaction an acyl phosphate + H2O = a carboxylate + phosphate + H(+). The polypeptide is Acylphosphatase (acyP) (Streptomyces coelicolor (strain ATCC BAA-471 / A3(2) / M145)).